Consider the following 274-residue polypeptide: Ribosomal RNA small subunit methyltransferase A (274 aa).

6 residues coordinate S-adenosyl-L-methionine: N26, L28, G53, E74, D94, and N114.

Belongs to the class I-like SAM-binding methyltransferase superfamily. rRNA adenine N(6)-methyltransferase family. RsmA subfamily.

It localises to the cytoplasm. The enzyme catalyses adenosine(1518)/adenosine(1519) in 16S rRNA + 4 S-adenosyl-L-methionine = N(6)-dimethyladenosine(1518)/N(6)-dimethyladenosine(1519) in 16S rRNA + 4 S-adenosyl-L-homocysteine + 4 H(+). Specifically dimethylates two adjacent adenosines (A1518 and A1519) in the loop of a conserved hairpin near the 3'-end of 16S rRNA in the 30S particle. May play a critical role in biogenesis of 30S subunits. The chain is Ribosomal RNA small subunit methyltransferase A from Bdellovibrio bacteriovorus (strain ATCC 15356 / DSM 50701 / NCIMB 9529 / HD100).